The chain runs to 224 residues: Urease accessory protein UreF (224 aa).

The protein belongs to the UreF family. UreD, UreF and UreG form a complex that acts as a GTP-hydrolysis-dependent molecular chaperone, activating the urease apoprotein by helping to assemble the nickel containing metallocenter of UreC. The UreE protein probably delivers the nickel.

Its subcellular location is the cytoplasm. In terms of biological role, required for maturation of urease via the functional incorporation of the urease nickel metallocenter. The polypeptide is Urease accessory protein UreF (Methylorubrum populi (strain ATCC BAA-705 / NCIMB 13946 / BJ001) (Methylobacterium populi)).